The chain runs to 260 residues: POLG alternative reading frame (260 aa).

Disordered regions lie at residues 1-50 (MEPK…LRPR) and 108-219 (ARRG…RRGG). Composition is skewed to low complexity over residues 36–48 (AGSS…LQLR), 116–154 (GRGA…GQPG), and 164–186 (AEPA…EAPG). The segment at 104–130 (ANLRARRGDAWRGRGAPQRRAPAEARA) is required for nucleolar localization. 2 stretches are compositionally biased toward gly residues: residues 187 to 199 (LGLG…VRPR) and 209 to 219 (RGAGPGVRRGG).

As to quaternary structure, interacts with C1QBP; the interaction results in nucleolar localization of C1QBP, probably due to prevention of C1QBP maturation and redirection from mitochondria to nucleoli. Undergoes proteolytic cleavage to produce a secreted C-terminal fragment.

The protein localises to the nucleus. It is found in the nucleolus. It localises to the secreted. The sequence is that of POLG alternative reading frame from Homo sapiens (Human).